Here is a 125-residue protein sequence, read N- to C-terminus: Large ribosomal subunit protein bL12 (125 aa).

This sequence belongs to the bacterial ribosomal protein bL12 family. As to quaternary structure, homodimer. Part of the ribosomal stalk of the 50S ribosomal subunit. Forms a multimeric L10(L12)X complex, where L10 forms an elongated spine to which 2 to 4 L12 dimers bind in a sequential fashion. Binds GTP-bound translation factors.

Its function is as follows. Forms part of the ribosomal stalk which helps the ribosome interact with GTP-bound translation factors. Is thus essential for accurate translation. In Caldanaerobacter subterraneus subsp. tengcongensis (strain DSM 15242 / JCM 11007 / NBRC 100824 / MB4) (Thermoanaerobacter tengcongensis), this protein is Large ribosomal subunit protein bL12.